The following is a 185-amino-acid chain: Cuticle protein 18.6, isoform A (185 aa).

7 repeat units span residues 21–24, 33–36, 41–44, 54–57, 133–136, 139–142, and 150–153. The Chitin-binding type R&amp;R domain occupies 64–134; that stretch reads HPQYSFAYNV…KEAGAHPAAA (71 aa).

Its function is as follows. Component of the cuticle of migratory locust which contains more than 100 different structural proteins. The polypeptide is Cuticle protein 18.6, isoform A (Locusta migratoria (Migratory locust)).